A 158-amino-acid chain; its full sequence is Urease accessory protein UreE (158 aa).

It belongs to the UreE family.

It localises to the cytoplasm. Involved in urease metallocenter assembly. Binds nickel. Probably functions as a nickel donor during metallocenter assembly. This Klebsiella pneumoniae subsp. pneumoniae (strain ATCC 700721 / MGH 78578) protein is Urease accessory protein UreE.